The primary structure comprises 273 residues: Co-chaperone protein DjlA (273 aa).

At 1–6 the chain is on the periplasmic side; it reads MHYWGK. Residues 7-31 traverse the membrane as a helical segment; the sequence is LLGLIFGVVSGAGFWGIVIGLFIGH. Topologically, residues 32 to 273 are cytoplasmic; that stretch reads MLDRASVRGN…DLIKKEKGFK (242 aa). The 67-residue stretch at 207–273 folds into the J domain; that stretch reads DACKVLGVRE…DLIKKEKGFK (67 aa).

In terms of assembly, homodimer.

The protein localises to the cell inner membrane. Its function is as follows. Regulatory DnaK co-chaperone. Direct interaction between DnaK and DjlA is needed for the induction of the wcaABCDE operon, involved in the synthesis of a colanic acid polysaccharide capsule, possibly through activation of the RcsB/RcsC phosphotransfer signaling pathway. The colanic acid capsule may help the bacterium survive conditions outside the host. The chain is Co-chaperone protein DjlA from Photorhabdus laumondii subsp. laumondii (strain DSM 15139 / CIP 105565 / TT01) (Photorhabdus luminescens subsp. laumondii).